The chain runs to 295 residues: MGPYLSQPKTEKTSVTGQNQVLQYAATHMQGWRNTMEDAHISDLNIEPDVHLFAVFDGHGGSEVAIFAERHFREELMKNKNYQQKNYEKALTETFFKIDKMLQEPSGLDELNKIRGVTDEASLAGCTANVALIVGKTLYVANAGDSRSFLNRDGKPFDMSKDHKPDDEQEKKRIERAGGFVSDGRVNGNLSLSRALGDLEYKKDNRFKPEEQIITALPDVKVTQLSAADKFLLMGCDGVFETWDHQQILNFINSELKNTQNLQKAAEKLLDQLLAKDTSLGTGCDNMTCILIQFK.

Positions Q23 to F294 constitute a PPM-type phosphatase domain. Residues D57, G58, D237, and D285 each contribute to the Mn(2+) site.

The protein belongs to the PP2C family. Requires Mg(2+) as cofactor. Mn(2+) serves as cofactor.

The protein resides in the membrane. It catalyses the reaction O-phospho-L-seryl-[protein] + H2O = L-seryl-[protein] + phosphate. It carries out the reaction O-phospho-L-threonyl-[protein] + H2O = L-threonyl-[protein] + phosphate. Functionally, enzyme with a broad specificity. The chain is Probable protein phosphatase 2C 6 from Paramecium tetraurelia.